A 424-amino-acid polypeptide reads, in one-letter code: D-inositol 3-phosphate glycosyltransferase (424 aa).

H21 contacts 1D-myo-inositol 3-phosphate. UDP-N-acetyl-alpha-D-glucosamine contacts are provided by residues 27 to 28 (QP) and G35. Residues 32 to 37 (DAGGMN), K90, Y123, T147, and R167 each bind 1D-myo-inositol 3-phosphate. Residues R241, K246, and Q299 each contribute to the UDP-N-acetyl-alpha-D-glucosamine site. F308, Q309, and A311 together coordinate Mg(2+). Positions 321 and 329 each coordinate UDP-N-acetyl-alpha-D-glucosamine. T335 lines the Mg(2+) pocket.

It belongs to the glycosyltransferase group 1 family. MshA subfamily. As to quaternary structure, homodimer.

The enzyme catalyses 1D-myo-inositol 3-phosphate + UDP-N-acetyl-alpha-D-glucosamine = 1D-myo-inositol 2-acetamido-2-deoxy-alpha-D-glucopyranoside 3-phosphate + UDP + H(+). Catalyzes the transfer of a N-acetyl-glucosamine moiety to 1D-myo-inositol 3-phosphate to produce 1D-myo-inositol 2-acetamido-2-deoxy-glucopyranoside 3-phosphate in the mycothiol biosynthesis pathway. The sequence is that of D-inositol 3-phosphate glycosyltransferase from Mycobacterium avium (strain 104).